The primary structure comprises 593 residues: V-type ATP synthase alpha chain (593 aa).

246 to 253 (GPFGAGKT) contacts ATP.

This sequence belongs to the ATPase alpha/beta chains family.

The catalysed reaction is ATP + H2O + 4 H(+)(in) = ADP + phosphate + 5 H(+)(out). In terms of biological role, produces ATP from ADP in the presence of a proton gradient across the membrane. The V-type alpha chain is a catalytic subunit. The sequence is that of V-type ATP synthase alpha chain from Protochlamydia amoebophila (strain UWE25).